The sequence spans 919 residues: Chitin synthase 1 (919 aa).

Disordered stretches follow at residues 1–69 and 109–134; these read MSYD…SFQT and NLASQSGFPPSTPCGGPSSYSSALGP. A compositionally biased stretch (low complexity) spans 11-30; that stretch reads GQGRDYARQQRQQRSYQLSD. Residues Asn187 and Asn556 are each glycosylated (N-linked (GlcNAc...) asparagine). A run of 7 helical transmembrane segments spans residues 594-614, 630-650, 668-688, 713-733, 742-762, 843-863, and 887-919; these read IVLLFSWFALANLWLTFSIII, LVVFHWINQAAKWIYVFFLVL, IASFIVFGILGLYLIFVSLWL, VLIAALAATFGIYLIASILYA, FPQYMMIAPSFINILNVYAFC, LVAFWLLTNGALTVAIENVNG, and IILWATFGLSAFRFIGCLIYWVKRNSTRCFRKT.

Belongs to the chitin synthase family. Class III subfamily.

The protein localises to the cell membrane. The protein resides in the cytoplasmic vesicle membrane. It catalyses the reaction [(1-&gt;4)-N-acetyl-beta-D-glucosaminyl](n) + UDP-N-acetyl-alpha-D-glucosamine = [(1-&gt;4)-N-acetyl-beta-D-glucosaminyl](n+1) + UDP + H(+). Its function is as follows. Polymerizes chitin, a structural polymer of the cell wall and septum, by transferring the sugar moiety of UDP-GlcNAc to the non-reducing end of the growing chitin polymer. This is Chitin synthase 1 from Mycosarcoma maydis (Corn smut fungus).